We begin with the raw amino-acid sequence, 399 residues long: MVCLKTLSVFLAAFAAADARAVFKTQGHKNSEMIPDNYIVVMKDGVSQDDFKAHVSSVASIHSTNKAKRGTNTEGMKREFDIMNWRGYHGHFDRDTLEEILNDSKVDYVEQDQVVRISGLVTQRGAPSWGLGRVSHRQAGSRDYVFDDSAGRGVTIYGVDTGIDINHQDFRGRARWGTNTADRDNADRHGHGTHTASTFAGTAYGIAKNANIVAVKVLGSDGSGSTSGIIAGINYCVQDAQQRGILGKAAMNLSLGGGFSQANNDAVTRAQNAGIFVAVAAGNDNRDARNYSPASAPAVCTVASSTINDSKSSFSNWGPVVDIYAPGSDIIAARPGGGSTTMSGTSMASPHVAGMGAYMIGLGADPRSLCDRLKQLATPAIRNPGSSTTNRLLYNGSGQ.

The signal sequence occupies residues 1–19; sequence MVCLKTLSVFLAAFAAADA. Residues 20–118 constitute a propeptide that is removed on maturation; sequence RAVFKTQGHK…VEQDQVVRIS (99 aa). Positions 38 to 117 constitute an Inhibitor I9 domain; the sequence is YIVVMKDGVS…YVEQDQVVRI (80 aa). N-linked (GlcNAc...) asparagine glycosylation occurs at N102. Positions 128-399 constitute a Peptidase S8 domain; the sequence is SWGLGRVSHR…NRLLYNGSGQ (272 aa). Catalysis depends on charge relay system residues D160 and H191. 2 N-linked (GlcNAc...) asparagine glycosylation sites follow: N252 and N308. The active-site Charge relay system is the S346. N395 carries N-linked (GlcNAc...) asparagine glycosylation.

This sequence belongs to the peptidase S8 family.

It localises to the secreted. Its function is as follows. Secreted subtilisin-like serine protease with keratinolytic activity that contributes to pathogenicity. In Trichophyton tonsurans (Scalp ringworm fungus), this protein is Subtilisin-like protease 4 (SUB4).